The following is a 242-amino-acid chain: Probable derlin-1 homolog (242 aa).

Residues 1–18 are Cytoplasmic-facing; sequence MDGVKEWFNSIPPVSRYM. A helical transmembrane segment spans residues 19–39; that stretch reads FAIFLGIPVLAAMHLISFNYL. Topologically, residues 40–98 are lumenal; sequence YLDFTFTFKHFHLWRLITAPCIISSLGPMFLFNLIFFYQYTTRLESLNYAGKSDDYLFC. A helical membrane pass occupies residues 99-119; that stretch reads IIFISICNIIFGLIFEYYFLG. Residues 120-140 lie on the Cytoplasmic side of the membrane; sequence TMTIMSLIYIYSRMNPTGTSN. The chain crosses the membrane as a helical span at residues 141–161; sequence FYGFFSFKTIYLPWVFLVAHF. Residues 162–167 are Lumenal-facing; it reads LQTGHP. A helical transmembrane segment spans residues 168–188; it reads PYSDFLAIVSGHIFFYLTDIY. Over 189–242 the chain is Cytoplasmic; the sequence is PRANGVPALIKTPKFITNIFNKGDRNPNNVRRDPRTGRPIQEGGYNWGQGHALG. A compositionally biased stretch (basic and acidic residues) spans 214–224; sequence NPNNVRRDPRT. Residues 214 to 242 are disordered; the sequence is NPNNVRRDPRTGRPIQEGGYNWGQGHALG. Over residues 233-242 the composition is skewed to gly residues; that stretch reads YNWGQGHALG.

The protein belongs to the derlin family.

The protein localises to the endoplasmic reticulum membrane. Functionally, may be involved in the degradation process of specific misfolded endoplasmic reticulum (ER) luminal proteins. May also involved in endoplasmic reticulum stress-induced pre-emptive quality control, a mechanism that selectively attenuates the translocation of newly synthesized proteins into the endoplasmic reticulum and reroutes them to the cytosol for proteasomal degradation. This is Probable derlin-1 homolog from Dictyostelium discoideum (Social amoeba).